A 92-amino-acid chain; its full sequence is Small ribosomal subunit protein uS19 (92 aa).

Belongs to the universal ribosomal protein uS19 family.

In terms of biological role, protein S19 forms a complex with S13 that binds strongly to the 16S ribosomal RNA. The protein is Small ribosomal subunit protein uS19 of Desulfosudis oleivorans (strain DSM 6200 / JCM 39069 / Hxd3) (Desulfococcus oleovorans).